A 570-amino-acid chain; its full sequence is Nucleoprotein (570 aa).

The segment at 54-241 (MRKQKRDDGD…IDTKKSSLNI (188 aa)) is binding site for the cap structure m7GTP. Residues aspartate 390 and glutamate 392 each coordinate Mn(2+). Glutamate 400, cysteine 507, histidine 510, and cysteine 530 together coordinate Zn(2+). Aspartate 534 contacts Mn(2+).

It belongs to the arenaviridae nucleocapsid protein family. As to quaternary structure, homomultimerizes to form the nucleocapsid. Binds to viral genomic RNA. Interacts with glycoprotein G2. Interacts with protein Z; this interaction probably directs the encapsidated genome to budding sites. Interacts with protein L; this interaction does not interfere with Z-L interaction. Interacts with host IKBKE (via Protein kinase domain); the interaction inhibits IKBKE kinase activity.

The protein localises to the virion. It localises to the host cytoplasm. In terms of biological role, encapsidates the genome, protecting it from nucleases. The encapsidated genomic RNA is termed the nucleocapsid (NC). Serves as template for viral transcription and replication. The increased presence of protein N in host cell does not seem to trigger the switch from transcription to replication as observed in other negative strain RNA viruses. Through the interaction with host IKBKE, strongly inhibits the phosphorylation and nuclear translocation of host IRF3, a protein involved in interferon activation pathway, leading to the inhibition of interferon-beta and IRF3-dependent promoters activation. Also encodes a functional 3'-5' exoribonuclease that degrades preferentially dsRNA substrates and thereby participates in the suppression of interferon induction. This is Nucleoprotein from Homo sapiens (Human).